The primary structure comprises 265 residues: Exosome complex component Rrp4 (265 aa).

The S1 motif domain occupies 65 to 137 (GDNVIGKIVD…EVNNIDLTTK (73 aa)). Residues 147 to 205 (KGGQIVKITPSRVPRVIGRGGSMINMIKKLTMTRIIVGQNGWIWVSGKNDALEKLAIEA) form the KH domain. The tract at residues 241–265 (EIPKLEEEPQGEDEVNGNDGEARGA) is disordered.

This sequence belongs to the RRP4 family. As to quaternary structure, component of the archaeal exosome complex. Forms a trimer of Rrp4 and/or Csl4 subunits. The trimer associates with a hexameric ring-like arrangement composed of 3 Rrp41-Rrp42 heterodimers.

The protein localises to the cytoplasm. In terms of biological role, non-catalytic component of the exosome, which is a complex involved in RNA degradation. Increases the RNA binding and the efficiency of RNA degradation. Confers strong poly(A) specificity to the exosome. The polypeptide is Exosome complex component Rrp4 (Pyrococcus abyssi (strain GE5 / Orsay)).